A 366-amino-acid chain; its full sequence is Anhydro-N-acetylmuramic acid kinase (366 aa).

ATP is bound at residue 10–17 (GTSMDGID).

The protein belongs to the anhydro-N-acetylmuramic acid kinase family.

It carries out the reaction 1,6-anhydro-N-acetyl-beta-muramate + ATP + H2O = N-acetyl-D-muramate 6-phosphate + ADP + H(+). Its pathway is amino-sugar metabolism; 1,6-anhydro-N-acetylmuramate degradation. It functions in the pathway cell wall biogenesis; peptidoglycan recycling. Catalyzes the specific phosphorylation of 1,6-anhydro-N-acetylmuramic acid (anhMurNAc) with the simultaneous cleavage of the 1,6-anhydro ring, generating MurNAc-6-P. Is required for the utilization of anhMurNAc either imported from the medium or derived from its own cell wall murein, and thus plays a role in cell wall recycling. The polypeptide is Anhydro-N-acetylmuramic acid kinase (Legionella pneumophila (strain Paris)).